The following is a 114-amino-acid chain: Ribonuclease P protein component (114 aa).

This sequence belongs to the RnpA family. Consists of a catalytic RNA component (M1 or rnpB) and a protein subunit.

It carries out the reaction Endonucleolytic cleavage of RNA, removing 5'-extranucleotides from tRNA precursor.. Functionally, RNaseP catalyzes the removal of the 5'-leader sequence from pre-tRNA to produce the mature 5'-terminus. It can also cleave other RNA substrates such as 4.5S RNA. The protein component plays an auxiliary but essential role in vivo by binding to the 5'-leader sequence and broadening the substrate specificity of the ribozyme. The chain is Ribonuclease P protein component from Legionella pneumophila (strain Lens).